Reading from the N-terminus, the 382-residue chain is D-galactonate dehydratase 1 (382 aa).

Position 183 (Asp-183) interacts with Mg(2+). His-185 serves as the catalytic Proton donor. Glu-209 and Glu-235 together coordinate Mg(2+). His-285 functions as the Proton acceptor in the catalytic mechanism.

This sequence belongs to the mandelate racemase/muconate lactonizing enzyme family. GalD subfamily. The cofactor is Mg(2+).

It carries out the reaction D-galactonate = 2-dehydro-3-deoxy-D-galactonate + H2O. The protein operates within carbohydrate acid metabolism; D-galactonate degradation; D-glyceraldehyde 3-phosphate and pyruvate from D-galactonate: step 1/3. Functionally, catalyzes the dehydration of D-galactonate to 2-keto-3-deoxy-D-galactonate. In Escherichia coli (strain SMS-3-5 / SECEC), this protein is D-galactonate dehydratase 1.